The primary structure comprises 173 residues: NADH-quinone oxidoreductase subunit 6 (173 aa).

[4Fe-4S] cluster contacts are provided by C53, C54, C118, and C148.

Belongs to the complex I 20 kDa subunit family. NDH-1 is composed of at least 14 different subunits, Nqo1 to Nqo14. The complex has a L-shaped structure, with the hydrophobic arm (subunits Nqo7, Nqo8, Nqo10 to Nqo14) embedded in the inner membrane and the hydrophilic peripheral arm (subunits Nqo1 to Nqo6, Nqo9) protruding into the bacterial cytoplasm. The hydrophilic domain contains all the redox centers. [4Fe-4S] cluster serves as cofactor.

It localises to the cell inner membrane. The catalysed reaction is a quinone + NADH + 5 H(+)(in) = a quinol + NAD(+) + 4 H(+)(out). Its function is as follows. NDH-1 shuttles electrons from NADH, via FMN and iron-sulfur (Fe-S) centers, to quinones in the respiratory chain. The immediate electron acceptor for the enzyme in this species is believed to be ubiquinone. Couples the redox reaction to proton translocation (for every two electrons transferred, four hydrogen ions are translocated across the cytoplasmic membrane), and thus conserves the redox energy in a proton gradient. The chain is NADH-quinone oxidoreductase subunit 6 (nqo6) from Paracoccus denitrificans.